Here is a 121-residue protein sequence, read N- to C-terminus: 18 kDa learning-associated protein of slug (121 aa).

Disordered regions lie at residues 44–67 (TMKTTEPIQENKTSEGTSTDGSME) and 95–121 (AVKKQKQKLNKLKIKKKSGKVSKAIKW). The segment covering 45 to 64 (MKTTEPIQENKTSEGTSTDG) has biased composition (polar residues).

Belongs to the learning-associated protein family. In terms of tissue distribution, expressed predominantly in cerebral ganglia (at protein level). The mRNA is highly expressed in cerebral ganglia, and is detected at lower levels in visceral-pedal ganglia, head, and body, but is not detected in the tail.

The protein localises to the cytoplasm. It is found in the secreted. May be involved in modulating long-term memory formation and retention, at least with respect to odor-taste associative learning. The sequence is that of 18 kDa learning-associated protein of slug from Lehmannia marginata (Tree slug).